We begin with the raw amino-acid sequence, 182 residues long: Orotate phosphoribosyltransferase (182 aa).

5-phospho-alpha-D-ribose 1-diphosphate is bound by residues Arg-96, Lys-97, Lys-100, His-102, and 122–130; that span reads EDTSTTGGS. Residues Thr-126 and Arg-154 each contribute to the orotate site.

This sequence belongs to the purine/pyrimidine phosphoribosyltransferase family. PyrE subfamily. Homodimer. The cofactor is Mg(2+).

It catalyses the reaction orotidine 5'-phosphate + diphosphate = orotate + 5-phospho-alpha-D-ribose 1-diphosphate. It participates in pyrimidine metabolism; UMP biosynthesis via de novo pathway; UMP from orotate: step 1/2. Catalyzes the transfer of a ribosyl phosphate group from 5-phosphoribose 1-diphosphate to orotate, leading to the formation of orotidine monophosphate (OMP). In Streptomyces avermitilis (strain ATCC 31267 / DSM 46492 / JCM 5070 / NBRC 14893 / NCIMB 12804 / NRRL 8165 / MA-4680), this protein is Orotate phosphoribosyltransferase.